The chain runs to 151 residues: Ribosome maturation factor RimP (151 aa).

The protein belongs to the RimP family.

Its subcellular location is the cytoplasm. Its function is as follows. Required for maturation of 30S ribosomal subunits. The sequence is that of Ribosome maturation factor RimP from Caldicellulosiruptor bescii (strain ATCC BAA-1888 / DSM 6725 / KCTC 15123 / Z-1320) (Anaerocellum thermophilum).